We begin with the raw amino-acid sequence, 604 residues long: Threonine--tRNA ligase (604 aa).

The catalytic stretch occupies residues 209 to 500; that stretch reads DHRKLGQEMG…LTEHFGGEFP (292 aa). Zn(2+) is bound by residues Cys301, His352, and His477.

The protein belongs to the class-II aminoacyl-tRNA synthetase family. As to quaternary structure, homodimer. It depends on Zn(2+) as a cofactor.

The protein localises to the cytoplasm. The enzyme catalyses tRNA(Thr) + L-threonine + ATP = L-threonyl-tRNA(Thr) + AMP + diphosphate + H(+). In terms of biological role, catalyzes the attachment of threonine to tRNA(Thr) in a two-step reaction: L-threonine is first activated by ATP to form Thr-AMP and then transferred to the acceptor end of tRNA(Thr). Also edits incorrectly charged L-seryl-tRNA(Thr). This chain is Threonine--tRNA ligase, found in Helicobacter hepaticus (strain ATCC 51449 / 3B1).